The chain runs to 231 residues: MKRAVVVFSGGQDSTTCLAQARHQYDEVHCVTFDYGQRHRAEIDVARALALKLGARAHKVLDVTLLNELAVSSLTRDSIPVPDYEPNADGIPNTFVPGRNILFLTLAAIYAYQVKAEAVITGVCETDFSGYPDCRDEFVKALNHAVNLGMAKDIRFETPLMWIDKAETWALADYWGQLDLVREETLTCYNGIKGDGCGHCAACNLRANGLNHYLSNKAAVMAAMKQKTGLR.

ATP is bound at residue Phe8 to Leu18. Zn(2+) contacts are provided by Cys188, Cys197, Cys200, and Cys203.

It belongs to the QueC family. The cofactor is Zn(2+).

It catalyses the reaction 7-carboxy-7-deazaguanine + NH4(+) + ATP = 7-cyano-7-deazaguanine + ADP + phosphate + H2O + H(+). It participates in purine metabolism; 7-cyano-7-deazaguanine biosynthesis. In terms of biological role, catalyzes the ATP-dependent conversion of 7-carboxy-7-deazaguanine (CDG) to 7-cyano-7-deazaguanine (preQ(0)). This is 7-cyano-7-deazaguanine synthase from Salmonella agona (strain SL483).